The primary structure comprises 277 residues: Histone-lysine N-methyltransferase set-17 (277 aa).

The 112-residue stretch at 135–246 (FRIEESKLPN…INQELLVWYG (112 aa)) folds into the SET domain. Tyrosine 245 lines the S-adenosyl-L-methionine pocket.

The protein belongs to the class V-like SAM-binding methyltransferase superfamily. As to expression, expressed in the germline. Predominantly expressed in primary spermatocytes. Also expressed in the oocyte-producing germline of hermaphrodites.

Its subcellular location is the nucleus. It carries out the reaction N(6)-methyl-L-lysyl(4)-[histone H3] + S-adenosyl-L-methionine = N(6),N(6)-dimethyl-L-lysyl(4)-[histone H3] + S-adenosyl-L-homocysteine + H(+). It catalyses the reaction L-lysyl(4)-[histone H3] + S-adenosyl-L-methionine = N(6)-methyl-L-lysyl(4)-[histone H3] + S-adenosyl-L-homocysteine + H(+). Functionally, histone methyltransferase that specifically mono- and di-methylates 'Lys-4' of histone H3 in vitro. Does not tri-methylate 'Lys-4' of histone H3 in vitro. Promotes spermatid development and fertility by positively regulating the transcription of spermatocyte-specific genes in primary spermatocytes. Together with spr-5, required for transgenerational fertility. This is Histone-lysine N-methyltransferase set-17 from Caenorhabditis elegans.